The chain runs to 75 residues: Brevinin-2SN1 (75 aa).

The first 22 residues, Met-1–Cys-22, serve as a signal peptide directing secretion. Residues Glu-23–Glu-40 constitute a propeptide, removed in mature form. Cys-69 and Cys-75 are oxidised to a cystine.

It belongs to the frog skin active peptide (FSAP) family. Brevinin subfamily. In terms of tissue distribution, expressed by the skin glands.

It is found in the secreted. Antimicrobial peptide. Active against some Gram-negative and a variety of Gram-positive bacterial strains. Active against fungus C.glabrata 090902 but not against C.albicans ATCC 10231. Shows hemolytic activity against human erythrocytes. The chain is Brevinin-2SN1 from Sylvirana spinulosa (Fine-spined frog).